A 304-amino-acid polypeptide reads, in one-letter code: D-tagatose-1-phosphate kinase (304 aa).

Catalysis depends on Asp-250, which acts as the Proton acceptor.

It belongs to the carbohydrate kinase PfkB family. Requires Mg(2+) as cofactor.

The enzyme catalyses alpha-D-tagatopyranose 1-phosphate + ATP = D-tagatofuranose 1,6-bisphosphate + ADP + H(+). Its pathway is carbohydrate degradation. Its activity is regulated as follows. Activity is inhibited by tagatose-6-phosphate and fructose-6-phosphate. In terms of biological role, kinase involved in a D-tagatose catabolic pathway. Catalyzes the phosphorylation of D-tagatose-1-phosphate (Tag-1P) to D-tagatose-1,6-bisphosphate. Can also use D-fructose-1-phosphate, with 40-fold lower catalytic efficiency, but not tagatose-6-phosphate or fructose-6-phosphate. The substrate, which occurs in a pyranose form in solution, may undergo a change to the furanose conformation after binding to the enzyme, in order to permit phosphorylation at C-6. This is D-tagatose-1-phosphate kinase from Bacillus licheniformis (strain ATCC 14580 / DSM 13 / JCM 2505 / CCUG 7422 / NBRC 12200 / NCIMB 9375 / NCTC 10341 / NRRL NRS-1264 / Gibson 46).